The chain runs to 434 residues: Adenylosuccinate synthetase (434 aa).

GTP-binding positions include 22–28 (GDEGKGK) and 50–52 (GHT). The Proton acceptor role is filled by Asp23. The Mg(2+) site is built by Asp23 and Gly50. Residues 23-26 (DEGK), 48-51 (NAGH), Thr139, Arg153, Gln234, Thr249, and Arg313 each bind IMP. His51 serves as the catalytic Proton donor. 309–315 (ATTGRKR) contributes to the substrate binding site. Residues Arg315, 341–343 (KLD), and 423–425 (SVG) each bind GTP.

The protein belongs to the adenylosuccinate synthetase family. In terms of assembly, homodimer. Mg(2+) serves as cofactor.

The protein localises to the cytoplasm. It catalyses the reaction IMP + L-aspartate + GTP = N(6)-(1,2-dicarboxyethyl)-AMP + GDP + phosphate + 2 H(+). Its pathway is purine metabolism; AMP biosynthesis via de novo pathway; AMP from IMP: step 1/2. Functionally, plays an important role in the de novo pathway of purine nucleotide biosynthesis. Catalyzes the first committed step in the biosynthesis of AMP from IMP. This chain is Adenylosuccinate synthetase, found in Chlorobium luteolum (strain DSM 273 / BCRC 81028 / 2530) (Pelodictyon luteolum).